Reading from the N-terminus, the 356-residue chain is Magnesium-protoporphyrin IX monomethyl ester [oxidative] cyclase (356 aa).

This sequence belongs to the AcsF family. Fe cation serves as cofactor.

It catalyses the reaction Mg-protoporphyrin IX 13-monomethyl ester + 3 NADPH + 3 O2 + 2 H(+) = 3,8-divinyl protochlorophyllide a + 3 NADP(+) + 5 H2O. Its pathway is porphyrin-containing compound metabolism; chlorophyll biosynthesis (light-independent). Its function is as follows. Catalyzes the formation of the isocyclic ring in chlorophyll biosynthesis. Mediates the cyclase reaction, which results in the formation of divinylprotochlorophyllide (Pchlide) characteristic of all chlorophylls from magnesium-protoporphyrin IX 13-monomethyl ester (MgPMME). The polypeptide is Magnesium-protoporphyrin IX monomethyl ester [oxidative] cyclase (Parasynechococcus marenigrum (strain WH8102)).